Reading from the N-terminus, the 520-residue chain is Cytochrome P450 1A1 (520 aa).

Phe230 is a substrate binding site. Cys464 lines the heme pocket.

This sequence belongs to the cytochrome P450 family. Heme serves as cofactor.

Its subcellular location is the endoplasmic reticulum membrane. It is found in the microsome membrane. It catalyses the reaction an organic molecule + reduced [NADPH--hemoprotein reductase] + O2 = an alcohol + oxidized [NADPH--hemoprotein reductase] + H2O + H(+). Its function is as follows. Cytochromes P450 are a group of heme-thiolate monooxygenases. In liver microsomes, this enzyme is involved in an NADPH-dependent electron transport pathway. It oxidizes a variety of structurally unrelated compounds, including steroids, fatty acids, and xenobiotics. The polypeptide is Cytochrome P450 1A1 (cyp1a1) (Dicentrarchus labrax (European seabass)).